Here is a 462-residue protein sequence, read N- to C-terminus: G-patch domain and KOW motifs-containing protein homolog 1 (462 aa).

2 disordered regions span residues 1–26 and 182–218; these read MVEQTTSEPAAGSMPKISFGVKKREE and LKLPNRRPPGLGLGATPKNPVGKNKNTGESSKAEEEK. The region spanning 154–202 is the G-patch domain; that stretch reads IESFGLAILRGCNWKDGDGIGKNPQKVALKLPNRRPPGLGLGATPKNPV. The KOW 1 domain occupies 221-248; it reads EIKVGSFIKVVDGRNKGVYGKVEGRDDD. Residues 289 to 305 show a composition bias toward basic and acidic residues; that stretch reads EYDKEKDRLETERKKLE. The disordered stretch occupies residues 289–337; that stretch reads EYDKEKDRLETERKKLESQPPSTSTSQSSKDYKSKSSSSKHDKNSSEYE. Low complexity predominate over residues 306 to 317; the sequence is SQPPSTSTSQSS. Residues 318–337 show a composition bias toward basic and acidic residues; sequence KDYKSKSSSSKHDKNSSEYE. In terms of domain architecture, KOW 2 spans 401–428; it reads PREIGEKLMIVAGKRSGQLAVMLDKDKR.

This sequence belongs to the MOS2 family.

It localises to the nucleus. The polypeptide is G-patch domain and KOW motifs-containing protein homolog 1 (Caenorhabditis elegans).